Here is a 378-residue protein sequence, read N- to C-terminus: Biotin synthase (378 aa).

Residues Asn-68–Ser-292 enclose the Radical SAM core domain. [4Fe-4S] cluster is bound by residues Cys-83, Cys-87, and Cys-90. [2Fe-2S] cluster-binding residues include Cys-129, Cys-160, Cys-220, and Arg-296.

It belongs to the radical SAM superfamily. Biotin synthase family. As to quaternary structure, homodimer. It depends on [4Fe-4S] cluster as a cofactor. Requires [2Fe-2S] cluster as cofactor.

It carries out the reaction (4R,5S)-dethiobiotin + (sulfur carrier)-SH + 2 reduced [2Fe-2S]-[ferredoxin] + 2 S-adenosyl-L-methionine = (sulfur carrier)-H + biotin + 2 5'-deoxyadenosine + 2 L-methionine + 2 oxidized [2Fe-2S]-[ferredoxin]. Its pathway is cofactor biosynthesis; biotin biosynthesis; biotin from 7,8-diaminononanoate: step 2/2. In terms of biological role, catalyzes the conversion of dethiobiotin (DTB) to biotin by the insertion of a sulfur atom into dethiobiotin via a radical-based mechanism. The chain is Biotin synthase from Psychrobacter arcticus (strain DSM 17307 / VKM B-2377 / 273-4).